A 667-amino-acid chain; its full sequence is tRNA 5-methylaminomethyl-2-thiouridine biosynthesis bifunctional protein MnmC (667 aa).

The segment at 1-241 is tRNA (mnm(5)s(2)U34)-methyltransferase; it reads MHKLTFAQLS…KREMLCGEKA (241 aa). Positions 268 to 667 are FAD-dependent cmnm(5)s(2)U34 oxidoreductase; it reads VGGGIASLFV…RKWLKGSKVV (400 aa).

It in the N-terminal section; belongs to the methyltransferase superfamily. tRNA (mnm(5)s(2)U34)-methyltransferase family. This sequence in the C-terminal section; belongs to the DAO family. FAD serves as cofactor.

The protein resides in the cytoplasm. It catalyses the reaction 5-aminomethyl-2-thiouridine(34) in tRNA + S-adenosyl-L-methionine = 5-methylaminomethyl-2-thiouridine(34) in tRNA + S-adenosyl-L-homocysteine + H(+). Catalyzes the last two steps in the biosynthesis of 5-methylaminomethyl-2-thiouridine (mnm(5)s(2)U) at the wobble position (U34) in tRNA. Catalyzes the FAD-dependent demodification of cmnm(5)s(2)U34 to nm(5)s(2)U34, followed by the transfer of a methyl group from S-adenosyl-L-methionine to nm(5)s(2)U34, to form mnm(5)s(2)U34. The polypeptide is tRNA 5-methylaminomethyl-2-thiouridine biosynthesis bifunctional protein MnmC (Haemophilus ducreyi (strain 35000HP / ATCC 700724)).